Here is a 72-residue protein sequence, read N- to C-terminus: DNA-directed RNA polymerase subunit omega (72 aa).

It belongs to the RNA polymerase subunit omega family. As to quaternary structure, the RNAP catalytic core consists of 2 alpha, 1 beta, 1 beta' and 1 omega subunit. When a sigma factor is associated with the core the holoenzyme is formed, which can initiate transcription.

The enzyme catalyses RNA(n) + a ribonucleoside 5'-triphosphate = RNA(n+1) + diphosphate. Its function is as follows. Promotes RNA polymerase assembly. Latches the N- and C-terminal regions of the beta' subunit thereby facilitating its interaction with the beta and alpha subunits. The sequence is that of DNA-directed RNA polymerase subunit omega from Clostridium kluyveri (strain NBRC 12016).